Reading from the N-terminus, the 101-residue chain is UPF0235 protein MmarC5_0538 (101 aa).

Belongs to the UPF0235 family.

This is UPF0235 protein MmarC5_0538 from Methanococcus maripaludis (strain C5 / ATCC BAA-1333).